Here is a 276-residue protein sequence, read N- to C-terminus: Tyrosinase (276 aa).

Cu cation is bound by residues histidine 38, histidine 56, histidine 66, histidine 193, histidine 197, and histidine 219.

It belongs to the tyrosinase family. The cofactor is Cu(2+).

It catalyses the reaction 2 L-dopa + O2 = 2 L-dopaquinone + 2 H2O. It carries out the reaction L-tyrosine + O2 = L-dopaquinone + H2O. Functionally, this is a copper-containing oxidase that functions in the formation of pigments such as melanins and other polyphenolic compounds. This Streptomyces galbus protein is Tyrosinase (melC2).